The primary structure comprises 199 residues: Hematopoietic prostaglandin D synthase (199 aa).

Positions 2–79 constitute a GST N-terminal domain; that stretch reads PNYKLTYFNM…YLTKNTDLAG (78 aa). Glutathione is bound by residues Tyr8, Arg14, Trp39, 49 to 51, and 63 to 64; these read GKI and QS. The region spanning 81 to 199 is the GST C-terminal domain; it reads TEMEQCHVDA…WIKRRPQTKL (119 aa).

Belongs to the GST superfamily. Sigma family. As to quaternary structure, homodimer. Glutathione is required as a cofactor. As to expression, expressed in a number of megakaryocytic cell lines but not in platelets. Highly expressed in adipose tissue, macrophages and placenta. Also expressed at lower levels in lung, heart, lymph nodes, appendix, bone marrow and fetal liver.

It is found in the cytoplasm. The catalysed reaction is prostaglandin H2 = prostaglandin D2. It carries out the reaction RX + glutathione = an S-substituted glutathione + a halide anion + H(+). It catalyses the reaction 2-glyceryl-prostaglandin H2 = 2-glyceryl-prostaglandin D2. Its activity is regulated as follows. Prostaglandin PGD2 synthesis is stimulated by calcium and magnesium ions. One calcium or magnesium ion is bound between the subunits of the homodimer. The interactions with the protein are for the most part mediated via water molecules. Magnesium increases the affinity for glutathione, while calcium has no effect on the affinity for glutathione. Functionally, bifunctional enzyme which catalyzes both the conversion of PGH2 to PGD2, a prostaglandin involved in smooth muscle contraction/relaxation and a potent inhibitor of platelet aggregation, and the conjugation of glutathione with a wide range of aryl halides and organic isothiocyanates. Also exhibits low glutathione-peroxidase activity towards cumene hydroperoxide. The chain is Hematopoietic prostaglandin D synthase from Homo sapiens (Human).